A 419-amino-acid polypeptide reads, in one-letter code: Argininosuccinate synthase (419 aa).

ATP contacts are provided by residues 9-17 (AYSGGLDTS) and A35. 2 residues coordinate L-citrulline: Y86 and S91. 114–122 (AHGATGKGN) serves as a coordination point for ATP. L-aspartate-binding residues include T118, N122, and D123. N122 contacts L-citrulline. 5 residues coordinate L-citrulline: R126, S179, S188, E270, and Y282.

Belongs to the argininosuccinate synthase family. Type 1 subfamily. Homotetramer.

The catalysed reaction is L-citrulline + L-aspartate + ATP = 2-(N(omega)-L-arginino)succinate + AMP + diphosphate + H(+). Its pathway is amino-acid biosynthesis; L-arginine biosynthesis; L-arginine from L-ornithine and carbamoyl phosphate: step 2/3. It functions in the pathway nitrogen metabolism; urea cycle; (N(omega)-L-arginino)succinate from L-aspartate and L-citrulline: step 1/1. The sequence is that of Argininosuccinate synthase from Drosophila melanogaster (Fruit fly).